The primary structure comprises 1207 residues: MVDVNRFKSMQITLASPSKVRSWSYGEVKKPETINYRTLKPEREGLFDEVIFGPTKDWECACGKYKRIRYKGIVCDRCGVEVTRAKVRRERMGHIELKAPVSHIWYFKGIPSRMGLTLDMSPRALEEVIYFAAYVVIDPKDTPLEPKSLLTEREYREKLQEYGHGSFVAKMGAEAIQDLLKRVDLAAEIAELKEELKSASGQKRIKAVRRLDVLDAFNKSGNKPEWMVLNILPVIPPDLRPMVQLDGGRFAASDLNDLYRRVINRNNRLARLLELNAPGIIVQNEKRMLQEAVDALIDNGRRGRPITGPGSRPLKSLSHMLKGKQGRFRQNLLGKRVDFSGRSVIAVGPTLKMYQCGVPREMAIELFKPFVMREIVAKEYAGNVKAAKRMVERGDERIWDILEEVIKEHPVLLNRAPTLHRLGIQAFEPVLIDGKALRLHPLVCEAYNADFDGDQMAIHVPLSEEAQAEARLLMLAAEHILNPKDGKPVVTPSQDMVLGNYYLTMEDAGREGEGMIFKDKDEAVMAYRNGYAHLHSRVGIAVDSMPNKPWKDSQRHKIMVTTVGKILFNDIMPEDLPYLQEPNNANLTEGTPDKYFLEPGQDIQEVIDGLDINVPFKKKNLGNIIAETFKRFRTTETSAFLDRLKDLGYYHSTLAGLTVGIADIPVIDNKAEIIDAAHHRVEEINKAFRRGLMTDDDRYVAVTTTWREAKEALEKRLIETQDPKNPIVMMMDSGARGNISNFSQLAGMRGLMAAPNGRIMELPILSNFREGLSVLEMFFSTHGARKGMTDTALKTADSGYLTRRLVDVAQDVIIREDDCGTDRGLLIRAITDGKEVTETLEERLQGRYTRKSVKHPETGEVLIGADQLITEDMARKIVDAGVEEVTIRSVFTCATRHGVCRHCYGINLATGDAVEVGEAVGTIAAQSIGEPGTQLTMRTFHTGGVASNTDITQGLPRIQEIFEARNPKGEAVITEVKGNVVEIEEDASTRTKKVYVQGKTGMGEYVVPFTARMKVEVGDEVNRGAALTEGSIQPKRLLEVRDTLSVETYLLAEVQKVYRSQGVEIGDKHVEVMVRQMLRKVRVMDPGDTDLLPGTLMDISDFTDANKDIVISGGIPATSRPVLMGITKASLETNSFLSAASFQETTRVLTDAAIRGKKDHLLGLKENVIIGKIIPAGTGMARYRNIEPQAMNEIEVIDHTEVSAEAE.

Residues Cys60, Cys62, Cys75, and Cys78 each coordinate Zn(2+). Mg(2+) contacts are provided by Asp450, Asp452, and Asp454. Zn(2+)-binding residues include Cys819, Cys893, Cys900, and Cys903.

It belongs to the RNA polymerase beta' chain family. The RNAP catalytic core consists of 2 alpha, 1 beta, 1 beta' and 1 omega subunit. When a sigma factor is associated with the core the holoenzyme is formed, which can initiate transcription. Mg(2+) serves as cofactor. It depends on Zn(2+) as a cofactor.

The enzyme catalyses RNA(n) + a ribonucleoside 5'-triphosphate = RNA(n+1) + diphosphate. Its function is as follows. DNA-dependent RNA polymerase catalyzes the transcription of DNA into RNA using the four ribonucleoside triphosphates as substrates. In Streptococcus pyogenes serotype M12 (strain MGAS2096), this protein is DNA-directed RNA polymerase subunit beta'.